The following is a 355-amino-acid chain: Protein RecA (355 aa).

67-74 (GPESSGKT) lines the ATP pocket.

It belongs to the RecA family.

Its subcellular location is the cytoplasm. Functionally, can catalyze the hydrolysis of ATP in the presence of single-stranded DNA, the ATP-dependent uptake of single-stranded DNA by duplex DNA, and the ATP-dependent hybridization of homologous single-stranded DNAs. It interacts with LexA causing its activation and leading to its autocatalytic cleavage. This is Protein RecA from Shewanella baltica (strain OS195).